The primary structure comprises 244 residues: MSVLDLNALNDLPKVDRVLALAETNAELEKLVAEERVAWSLENLPGEYVLSSSFGIQAAVSLHLVNQIRPDIPVILTDTGYLFPETYQFIDALTDKLKLNLKVYRATESAAWQEARYGKLWEQGVEGIEKYNEINKVEPMNRALQDLNAQTWFAGLRREQSGSRTSLPVLAIQRGVFKVLPIIDWDNRTVYQYLQKHGLKYHPLWHQGYLSVGDTHTTRKWEPGMAEEETRFFGLKRECGLHEG.

Residue C239 is the Nucleophile; cysteine thiosulfonate intermediate of the active site.

This sequence belongs to the PAPS reductase family. CysH subfamily.

The protein localises to the cytoplasm. The catalysed reaction is [thioredoxin]-disulfide + sulfite + adenosine 3',5'-bisphosphate + 2 H(+) = [thioredoxin]-dithiol + 3'-phosphoadenylyl sulfate. It participates in sulfur metabolism; hydrogen sulfide biosynthesis; sulfite from sulfate: step 3/3. Catalyzes the formation of sulfite from phosphoadenosine 5'-phosphosulfate (PAPS) using thioredoxin as an electron donor. The protein is Phosphoadenosine 5'-phosphosulfate reductase of Salmonella arizonae (strain ATCC BAA-731 / CDC346-86 / RSK2980).